The chain runs to 327 residues: Meiotic coiled-coil protein 6 (327 aa).

The stretch at 66 to 188 forms a coiled coil; the sequence is DAFERDSTQR…TETKEMNKIK (123 aa). Residues 175–199 are compositionally biased toward basic and acidic residues; the sequence is RRMETETKEMNKIKPKNDSESDRFK. Residues 175-234 form a disordered region; that stretch reads RRMETETKEMNKIKPKNDSESDRFKRNSQSLSQQSPLLDVHSPDNSNHRTMLNINNSSPI. Positions 202–212 are enriched in low complexity; sequence SQSLSQQSPLL. The segment covering 217 to 232 has biased composition (polar residues); it reads PDNSNHRTMLNINNSS. Residues 243 to 297 are a coiled coil; the sequence is NEVKNRISRLQKTFADLENQHHSFQQICQTLRKRLENDSSTTKQRLSKLEEIIRN.

As to quaternary structure, interacts with alp4, kms1 and mbo1.

It is found in the nucleus. It localises to the cytoplasm. The protein resides in the cytoskeleton. The protein localises to the microtubule organizing center. Its subcellular location is the spindle pole body. In terms of biological role, has a role in meiotic nuclear oscillation and recombination. Required to remodel astral microtubules into the 'horsetail' astral array maintaining the 'horsetail' nuclear movement. Promotes homologous paring of chromosomes during this movement. In Schizosaccharomyces pombe (strain 972 / ATCC 24843) (Fission yeast), this protein is Meiotic coiled-coil protein 6 (mcp6).